A 349-amino-acid polypeptide reads, in one-letter code: tRNA uridine(34) hydroxylase (349 aa).

Residues 146–240 (DDPDAVFIDM…YARKAREQGL (95 aa)) form the Rhodanese domain. Cys200 serves as the catalytic Cysteine persulfide intermediate. Residues 314–328 (PEEEQRRRRAGRENG) are compositionally biased toward basic and acidic residues. The interval 314–349 (PEEEQRRRRAGRENGNKIFNKSRGRLNTTLGIPDPE) is disordered.

It belongs to the TrhO family.

It carries out the reaction uridine(34) in tRNA + AH2 + O2 = 5-hydroxyuridine(34) in tRNA + A + H2O. Catalyzes oxygen-dependent 5-hydroxyuridine (ho5U) modification at position 34 in tRNAs. This is tRNA uridine(34) hydroxylase from Cronobacter sakazakii (strain ATCC BAA-894) (Enterobacter sakazakii).